Consider the following 164-residue polypeptide: Ribosomal RNA large subunit methyltransferase H (164 aa).

Position 109 (glycine 109) interacts with S-adenosyl-L-methionine.

It belongs to the RNA methyltransferase RlmH family. In terms of assembly, homodimer.

The protein resides in the cytoplasm. The enzyme catalyses pseudouridine(1915) in 23S rRNA + S-adenosyl-L-methionine = N(3)-methylpseudouridine(1915) in 23S rRNA + S-adenosyl-L-homocysteine + H(+). Its function is as follows. Specifically methylates the pseudouridine at position 1915 (m3Psi1915) in 23S rRNA. The sequence is that of Ribosomal RNA large subunit methyltransferase H from Methylobacterium radiotolerans (strain ATCC 27329 / DSM 1819 / JCM 2831 / NBRC 15690 / NCIMB 10815 / 0-1).